The primary structure comprises 359 residues: 3-dehydroquinate synthase (359 aa).

NAD(+) is bound by residues 71-76 (DGEAYK), 105-109 (GVIGD), 129-130 (TT), K142, and K151. Residues E184, H247, and H264 each contribute to the Zn(2+) site.

This sequence belongs to the sugar phosphate cyclases superfamily. Dehydroquinate synthase family. The cofactor is Co(2+). Requires Zn(2+) as cofactor. It depends on NAD(+) as a cofactor.

It localises to the cytoplasm. The enzyme catalyses 7-phospho-2-dehydro-3-deoxy-D-arabino-heptonate = 3-dehydroquinate + phosphate. It functions in the pathway metabolic intermediate biosynthesis; chorismate biosynthesis; chorismate from D-erythrose 4-phosphate and phosphoenolpyruvate: step 2/7. Its function is as follows. Catalyzes the conversion of 3-deoxy-D-arabino-heptulosonate 7-phosphate (DAHP) to dehydroquinate (DHQ). The sequence is that of 3-dehydroquinate synthase from Burkholderia ambifaria (strain MC40-6).